The chain runs to 372 residues: Flap endonuclease 1 (372 aa).

The tract at residues 1 to 105 is N-domain; the sequence is MGVKGLNQLI…GELEKRLLRR (105 aa). Asp-34 is a Mg(2+) binding site. Residues Arg-47 and Arg-71 each coordinate DNA. Asp-87, Glu-159, Glu-161, Asp-180, and Asp-182 together coordinate Mg(2+). Positions 123 to 254 are I-domain; sequence EVLKFEKRLV…ATAFKLIKEH (132 aa). Glu-159 is a DNA binding site. Positions 232 and 234 each coordinate DNA. Asp-234 is a binding site for Mg(2+). Residues 339–347 form an interaction with PCNA region; it reads VQGRLDGFF.

This sequence belongs to the XPG/RAD2 endonuclease family. FEN1 subfamily. As to quaternary structure, interacts with PCNA. Three molecules of RAD27 bind to one PCNA trimer with each molecule binding to one PCNA monomer. PCNA stimulates the nuclease activity without altering cleavage specificity. Mg(2+) is required as a cofactor. Post-translationally, phosphorylated. Phosphorylation upon DNA damage induces relocalization to the nuclear plasma.

It is found in the nucleus. It localises to the nucleolus. The protein resides in the nucleoplasm. Its subcellular location is the mitochondrion. Structure-specific nuclease with 5'-flap endonuclease and 5'-3' exonuclease activities involved in DNA replication and repair. During DNA replication, cleaves the 5'-overhanging flap structure that is generated by displacement synthesis when DNA polymerase encounters the 5'-end of a downstream Okazaki fragment. It enters the flap from the 5'-end and then tracks to cleave the flap base, leaving a nick for ligation. Also involved in the long patch base excision repair (LP-BER) pathway, by cleaving within the apurinic/apyrimidinic (AP) site-terminated flap. Acts as a genome stabilization factor that prevents flaps from equilibrating into structures that lead to duplications and deletions. Also possesses 5'-3' exonuclease activity on nicked or gapped double-stranded DNA, and exhibits RNase H activity. Also involved in replication and repair of rDNA and in repairing mitochondrial DNA. The sequence is that of Flap endonuclease 1 from Candida dubliniensis (strain CD36 / ATCC MYA-646 / CBS 7987 / NCPF 3949 / NRRL Y-17841) (Yeast).